The chain runs to 217 residues: Proteasome subunit beta type-9 (217 aa).

Residues 1–18 (MLEESSEPGWLSEEVKTG) constitute a propeptide, removed in mature form. The active-site Nucleophile is threonine 19.

Belongs to the peptidase T1B family. The 26S proteasome consists of a 20S proteasome core and two 19S regulatory subunits. The 20S proteasome core is composed of 28 subunits that are arranged in four stacked rings, resulting in a barrel-shaped structure. The two end rings are each formed by seven alpha subunits, and the two central rings are each formed by seven beta subunits. The catalytic chamber with the active sites is on the inside of the barrel. Component of the immunoproteasome, where it displaces the equivalent housekeeping subunit PSMB6. Post-translationally, autocleaved. The resulting N-terminal Thr residue of the mature subunit is responsible for the nucleophile proteolytic activity.

The protein localises to the cytoplasm. It localises to the nucleus. The enzyme catalyses Cleavage of peptide bonds with very broad specificity.. In terms of biological role, the proteasome is a multicatalytic proteinase complex which is characterized by its ability to cleave peptides with Arg, Phe, Tyr, Leu, and Glu adjacent to the leaving group at neutral or slightly basic pH. The proteasome has an ATP-dependent proteolytic activity. This subunit is involved in antigen processing to generate class I binding peptides. This is Proteasome subunit beta type-9 (psmb9-a) from Salmo salar (Atlantic salmon).